The primary structure comprises 357 residues: Protein BMRF2 (357 aa).

The Virion surface segment spans residues 1–11 (MFSCKQHLSLG). The hydrophobic stretch at 12-32 (ACVFCLGLLASTPFIWCFVFA) threads the membrane. Over 33–46 (NLLSLEIFSPWQTH) the chain is Virion surface. A membrane pass occupies residues 47-67 (VYRLGFPTACLMAVLWTLVPA). At 68-70 (KHA) the chain is on the virion surface side. Positions 71–91 (VRAVTPAIMLNIASALIFFSL) form a transmembrane segment. Over 92-98 (RVYSTST) the chain is Virion surface. The segment at 99–121 (WVSAPCLFLANLPLLCLWPRLAI) is a transmembrane helix. Residues 122–133 (EIVYICPAIHQR) are Virion surface-facing. A transmembrane helix spans residues 134 to 154 (FFELGLLLACTIFALSVVSRA). Residues 155–158 (LEVS) are Virion surface-facing. Residues 159–179 (AVFMSPFFIFLALGSGSLAGA) are membrane-embedded. Topologically, residues 180-217 (RRNQIYTSGLERRRSIFCARGDHSVASLKETLHKCPWD) are virion surface. Residues 199 to 201 (RGD) carry the Integrin binding site motif. A membrane pass occupies residues 218 to 238 (LLAISALTVLVVCVMIVLHVH). The Virion surface segment spans residues 239 to 240 (AE). The hydrophobic stretch at 241-261 (VFFGLSRYLPLFLCGAMASGG) threads the membrane. Residues 262-267 (LYLGHS) lie on the Virion surface side of the membrane. Over 268–288 (SIIACVMATLCTLTSVVVYFL) the chain traverses the membrane. At 289-298 (HETLGPLGKT) the chain is on the virion surface side. Positions 299–319 (VLFISIFVYYFSGVAALSAAM) form a transmembrane segment. Residues 320 to 335 (RYKLKKFVNGPLVHLR) lie on the Virion surface side of the membrane. The hydrophobic stretch at 336–356 (VVYMCCFVFTFCEYLLVTFIK) threads the membrane. Position 357 (Ser357) is a topological domain, virion surface.

This sequence belongs to the herpesviridae BMRF2 family. As to quaternary structure, interacts with BDLF2. Interacts with host beta1 integrin family. In terms of processing, extensively glycosylated by O-linked oligosaccharides.

It is found in the virion membrane. The protein localises to the host cell membrane. Functionally, facilitates virus attachment to oral epithelial cells by binding to host beta1 integrin family. Participates in rearrangement of cellular actin to increase intercellular contacts by binding BDLF2 and thereby promote virus cell-to-cell spreading. The polypeptide is Protein BMRF2 (Homo sapiens (Human)).